The chain runs to 728 residues: MFKITREEIEWGGRTLVLETGKIARQADGAVLATYGDTTVLATVVGERKPKPGLDFFPLTVNYQEKTYAAGKIPGGFFKREGRPSEKETLVSRLIDRPIRPLFIKGFKNETQVIATVVSHDMENDPDIVAMIAVSAALTISGLPFLGPIGAARVGYIGGEYKLNPMIDEMPESALDLVVAGTADAVMMVESEAKELSEDIMLGAVMFGHKEFQPVIDMIIRMAEKCAKEPRAIDVKDNSELVAKVRELAESDVRAAYGLKDKGQRHEALAAAKDKVKSALCNPEDPNAVSETDVGGVFKSIESDVVRNSILDTKSRIDGRDLETVRPIVSEVGVLPRTHGSALFTRGETQALVVATLGTGDDEQFIDALEGTYKENFLLHYNFPPFSVGETGRVGFTGRREVGHGKLAWRALRAVLPPKTEFPYTLRLVSEITESNGSSSMATVCGSSLAMMDAGVPLKRAVAGIAMGLILEGERFAVLSDILGDEDHLGDMDFKVAGTQEGVTSLQMDIKITGINERIMKQALAQAKGGRLHILGEMAKALDTARPEMGEYAPRIEVITVPTDKIREVIGTGGKVIREIVEKTGAKVDISDDGTIKVASSDGESIRKAIAWIQGIVAEPEVGKIYEGTVVKAVDFGAFVNFFGPRDGLVHISQMAPTRVEQVSDVVKEGDKVKVKLLGFDDRGKVRLSMKHVNQETGEEIVYENEPAEQPREKREGGGGRGRRRERD.

Mg(2+)-binding residues include D487 and D493. The 60-residue stretch at 554 to 613 (PRIEVITVPTDKIREVIGTGGKVIREIVEKTGAKVDISDDGTIKVASSDGESIRKAIAWI) folds into the KH domain. In terms of domain architecture, S1 motif spans 623-691 (GKIYEGTVVK…DRGKVRLSMK (69 aa)). Residues 697–707 (TGEEIVYENEP) are compositionally biased toward acidic residues. Residues 697–728 (TGEEIVYENEPAEQPREKREGGGGRGRRRERD) form a disordered region. The span at 709–718 (EQPREKREGG) shows a compositional bias: basic and acidic residues.

The protein belongs to the polyribonucleotide nucleotidyltransferase family. Mg(2+) serves as cofactor.

The protein localises to the cytoplasm. It carries out the reaction RNA(n+1) + phosphate = RNA(n) + a ribonucleoside 5'-diphosphate. Involved in mRNA degradation. Catalyzes the phosphorolysis of single-stranded polyribonucleotides processively in the 3'- to 5'-direction. The polypeptide is Polyribonucleotide nucleotidyltransferase (Parvibaculum lavamentivorans (strain DS-1 / DSM 13023 / NCIMB 13966)).